The chain runs to 323 residues: UDP-galactose/UDP-glucose transporter 7 (323 aa).

Topologically, residues 1 to 10 are cytoplasmic; it reads MEVQAEMEPT. A helical transmembrane segment spans residues 11-31; it reads SSISLVAAVSYGIASMAMVFI. Over 32–35 the chain is Lumenal; the sequence is NKAV. The chain crosses the membrane as a helical span at residues 36–58; it reads IMQYPHSMTVLTLQQLATSLLIH. Residues 59 to 78 are Cytoplasmic-facing; the sequence is FGRRMGYTRAKGIDMATAKK. Residues 79-97 form a helical membrane-spanning segment; the sequence is LLPVSIFYNANVAFALASL. At 98-101 the chain is on the lumenal side; it reads KGVN. Residues 102-124 traverse the membrane as a helical segment; sequence IPMYIAIKRLTPLAVLISGVLFG. The Cytoplasmic segment spans residues 125 to 132; it reads KGKPTTQV. A helical transmembrane segment spans residues 133 to 153; it reads ALSVLLTAAGCVIAALGDFSF. Position 154 (D154) is a topological domain, lumenal. Residues 155 to 175 form a helical membrane-spanning segment; the sequence is LFGYGLALTSVFFQTMYLVLV. The Cytoplasmic segment spans residues 176 to 186; it reads EKSGAEDGLSS. A helical membrane pass occupies residues 187–207; the sequence is IEIMFYNSFLSLPFLSILIIV. Topologically, residues 208 to 226 are lumenal; it reads TGEFPNSLSLLLAKCSYLP. Residues 227–247 traverse the membrane as a helical segment; it reads FLVILILSLVMGIVLNFTMFL. Over 248-252 the chain is Cytoplasmic; that stretch reads CTIVN. A helical membrane pass occupies residues 253–275; sequence SALTTTIVGVLKGVGSTTLGFVL. Residues 276–278 lie on the Lumenal side of the membrane; it reads LGG. The chain crosses the membrane as a helical span at residues 279–301; that stretch reads VEVHALNVSGLVVNTAGGVWYSY. Over 302-323 the chain is Cytoplasmic; it reads AKYRQKKAKPAKLMSDLEAHKK.

The protein belongs to the TPT transporter family. UGnT (TC 2.A.7.15) subfamily. As to expression, widely expressed with highest expression in roots.

The protein resides in the golgi apparatus membrane. Nucleotide-sugar transporter that transports UDP-glucose and UDP-galactose. Plays a role in lateral root and root hair development. This is UDP-galactose/UDP-glucose transporter 7 from Arabidopsis thaliana (Mouse-ear cress).